We begin with the raw amino-acid sequence, 90 residues long: Small ribosomal subunit protein bS16 (90 aa).

Belongs to the bacterial ribosomal protein bS16 family.

This is Small ribosomal subunit protein bS16 from Lactobacillus gasseri (strain ATCC 33323 / DSM 20243 / BCRC 14619 / CIP 102991 / JCM 1131 / KCTC 3163 / NCIMB 11718 / NCTC 13722 / AM63).